The primary structure comprises 57 residues: uncharacterized protein (57 aa).

Residues 9-45 (NWQEEIRKIIIERVRREAKKRLLEETRKLRMEMKSSK) are a coiled coil.

This is an uncharacterized protein from Archaeoglobus fulgidus (strain ATCC 49558 / DSM 4304 / JCM 9628 / NBRC 100126 / VC-16).